We begin with the raw amino-acid sequence, 510 residues long: ATP synthase subunit alpha, mitochondrial (510 aa).

ATP is bound at residue 171-178 (GDRQTGKT).

F-type ATP synthases have 2 components, the catalytic core F(1) and the membrane-embedded component F(0), linked together by a central stalk and a peripheral stalk. The central stalk, also called rotor shaft, is often seen as part of F(1). The peripheral stalk is seen as part of F(0). F(0) contains the membrane channel next to the rotor. F-type ATP synthases form dimers but each monomer functions independently in ATP generation. The dimer consists of 18 different polypeptides: ATP1 (subunit alpha, part of F(1), 3 molecules per monomer), ATP2 (subunit beta, part of F(1), 3 molecules per monomer), ATP3 (subunit gamma, part of the central stalk), ATP4 (subunit b, part of the peripheral stalk), ATP5/OSCP (subunit 5/OSCP, part of the peripheral stalk), ATP6 (subunit a, part of the peripheral stalk), ATP7 (subunit d, part of the peripheral stalk), ATP8 (subunit 8, part of the peripheral stalk), OLI1 (subunit c, part of the rotor, 10 molecules per monomer), ATP14 (subunit h, part of the peripheral stalk), ATP15 (subunit epsilon, part of the central stalk), ATP16 (subunit delta, part of the central stalk), ATP17 (subunit f, part of the peripheral stalk), ATP18 (subunit i/j, part of the peripheral stalk). Dimer-specific subunits are ATP19 (subunit k, at interface between monomers), ATP20 (subunit g, at interface between monomers), TIM11 (subunit e, at interface between monomers). Also contains subunit L.

Its subcellular location is the mitochondrion inner membrane. Mitochondrial membrane ATP synthase (F(1)F(0) ATP synthase or Complex V) produces ATP from ADP in the presence of a proton gradient across the membrane which is generated by electron transport complexes of the respiratory chain. F-type ATP synthases consist of two structural domains, F(1) - containing the extramembraneous catalytic core, and F(0) - containing the membrane proton channel, linked together by a central stalk and a peripheral stalk. During catalysis, ATP synthesis in the catalytic domain of F(1) is coupled via a rotary mechanism of the central stalk subunits to proton translocation. Subunits alpha/ATP1 and beta/ATP2 form the catalytic core in F(1). Rotation of the central stalk against the surrounding alpha/ATP1(3)beta/ATP2(3) subunits leads to hydrolysis of ATP in three separate catalytic sites on the beta/ATP2 subunits. Subunit alpha/ATP1 does not bear the catalytic high-affinity ATP-binding sites. The chain is ATP synthase subunit alpha, mitochondrial from Pichia angusta (Yeast).